The sequence spans 90 residues: UPF0298 protein BLi01717/BL02989 (90 aa).

This sequence belongs to the UPF0298 family.

The protein localises to the cytoplasm. This chain is UPF0298 protein BLi01717/BL02989, found in Bacillus licheniformis (strain ATCC 14580 / DSM 13 / JCM 2505 / CCUG 7422 / NBRC 12200 / NCIMB 9375 / NCTC 10341 / NRRL NRS-1264 / Gibson 46).